A 382-amino-acid polypeptide reads, in one-letter code: Gap junction alpha-1 protein (382 aa).

Residues 2–23 are Cytoplasmic-facing; it reads GDWSALGKLLDKVQAYSTAGGK. Serine 5 is modified (phosphoserine). Residues 24–44 traverse the membrane as a helical segment; sequence VWLSVLFIFRILLLGTAVESA. Topologically, residues 45 to 76 are extracellular; it reads WGDEQSAFRCNTQQPGCENVCYDKSFPISHVR. Intrachain disulfides connect cysteine 54–cysteine 192 and cysteine 187–cysteine 198. Residues 77-97 traverse the membrane as a helical segment; it reads FWVLQIIFVSVPTLLYLAHVF. Residues 98–155 lie on the Cytoplasmic side of the membrane; it reads YVMRKEEKLNKKEEELKVAQTDGVNVEMHLKQIEIKKFKYGIEEHGKVKMRGGLLRTY. Lysine 144 is covalently cross-linked (Glycyl lysine isopeptide (Lys-Gly) (interchain with G-Cter in SUMO)). Residues 156–176 form a helical membrane-spanning segment; that stretch reads IISILFKSVFEVAFLLIQWYI. Residues 177–207 are Extracellular-facing; that stretch reads YGFSLSAVYTCKRDPCPHQVDCFLSRPTEKT. Residues 208–228 form a helical membrane-spanning segment; that stretch reads IFIIFMLVVSLVSLALNIIEL. Topologically, residues 229–382 are cytoplasmic; the sequence is FYVFFKGVKD…SRPRPDDLEI (154 aa). Lysine 237 participates in a covalent cross-link: Glycyl lysine isopeptide (Lys-Gly) (interchain with G-Cter in SUMO). The segment at 244 to 382 is interaction with NOV; that stretch reads SDPYHATTGP…SRPRPDDLEI (139 aa). Tyrosine 247 bears the Phosphotyrosine mark. A phosphoserine mark is found at serine 255, serine 257, and serine 262. The segment at 264–382 is interaction with UBQLN4; it reads KYAYFNGCSS…SRPRPDDLEI (119 aa). Cysteine 271 is modified (S-nitrosocysteine). Position 275 is a phosphothreonine (threonine 275). 2 positions are modified to phosphoserine: serine 306 and serine 314. Residues 317-332 show a composition bias toward polar residues; the sequence is QNRMGQAGSTISNSHA. The tract at residues 317 to 382 is disordered; sequence QNRMGQAGST…SRPRPDDLEI (66 aa). At serine 325 the chain carries Phosphoserine; by CK1. Threonine 326 is subject to Phosphothreonine. Residues serine 328 and serine 330 each carry the phosphoserine; by CK1 modification. 2 positions are modified to phosphoserine: serine 344 and serine 365. Positions 362–374 are enriched in low complexity; that stretch reads RPSSRASSRASSR. A Phosphoserine; by PKC/PRKCG and PKC/PRKCD modification is found at serine 368. 2 positions are modified to phosphoserine: serine 369 and serine 373.

This sequence belongs to the connexin family. Alpha-type (group II) subfamily. As to quaternary structure, a connexon is composed of a hexamer of connexins. Interacts with SGSM3. Interacts with RIC1/CIP150. Interacts with CNST and CSNK1D. Interacts (via C-terminus) with TJP1. Interacts (via C-terminus) with SRC (via SH3 domain). Interacts (not ubiquitinated) with UBQLN4 (via UBA domain). Interacts with NOV. Interacts with TMEM65. Interacts with ANK3/ANKG and PKP2. In terms of processing, phosphorylation at Ser-325, Ser-328 and Ser-330 by CK1 modulates gap junction assembly. Phosphorylated at Ser-368 by PRKCG; phosphorylation induces disassembly of gap junction plaques and inhibition of gap junction activity. Phosphorylation at Ser-368 by PRKCD triggers its internalization into small vesicles leading to proteasome-mediated degradation. Post-translationally, sumoylated with SUMO1, SUMO2 and SUMO3, which may regulate the level of functional Cx43 gap junctions at the plasma membrane. May be desumoylated by SENP1 or SENP2. S-nitrosylation at Cys-271 is enriched at the muscle endothelial gap junction in arteries, it augments channel permeability and may regulate of smooth muscle cell to endothelial cell communication. In terms of processing, acetylated in the developing cortex; leading to delocalization from the cell membrane.

Its subcellular location is the cell membrane. It is found in the cell junction. The protein resides in the gap junction. It localises to the endoplasmic reticulum. Its function is as follows. Gap junction protein that acts as a regulator of bladder capacity. A gap junction consists of a cluster of closely packed pairs of transmembrane channels, the connexons, through which materials of low MW diffuse from one cell to a neighboring cell. May play a critical role in the physiology of hearing by participating in the recycling of potassium to the cochlear endolymph. Negative regulator of bladder functional capacity: acts by enhancing intercellular electrical and chemical transmission, thus sensitizing bladder muscles to cholinergic neural stimuli and causing them to contract. May play a role in cell growth inhibition through the regulation of NOV expression and localization. Plays an essential role in gap junction communication in the ventricles. This is Gap junction alpha-1 protein (GJA1) from Ursus americanus (American black bear).